We begin with the raw amino-acid sequence, 264 residues long: Thymidylate synthase (264 aa).

Position 21 (arginine 21) interacts with dUMP. Histidine 51 serves as a coordination point for (6R)-5,10-methylene-5,6,7,8-tetrahydrofolate. Residue 126–127 (RR) participates in dUMP binding. The Nucleophile role is filled by cysteine 146. DUMP-binding positions include 166 to 169 (RSCD), asparagine 177, and 207 to 209 (HLY). Aspartate 169 serves as a coordination point for (6R)-5,10-methylene-5,6,7,8-tetrahydrofolate. Residue alanine 263 participates in (6R)-5,10-methylene-5,6,7,8-tetrahydrofolate binding.

Belongs to the thymidylate synthase family. Bacterial-type ThyA subfamily. In terms of assembly, homodimer.

Its subcellular location is the cytoplasm. The catalysed reaction is dUMP + (6R)-5,10-methylene-5,6,7,8-tetrahydrofolate = 7,8-dihydrofolate + dTMP. The protein operates within pyrimidine metabolism; dTTP biosynthesis. Its function is as follows. Catalyzes the reductive methylation of 2'-deoxyuridine-5'-monophosphate (dUMP) to 2'-deoxythymidine-5'-monophosphate (dTMP) while utilizing 5,10-methylenetetrahydrofolate (mTHF) as the methyl donor and reductant in the reaction, yielding dihydrofolate (DHF) as a by-product. This enzymatic reaction provides an intracellular de novo source of dTMP, an essential precursor for DNA biosynthesis. This Pectobacterium carotovorum subsp. carotovorum (strain PC1) protein is Thymidylate synthase.